The sequence spans 223 residues: MNAKELIARRIAMELHDGDIVNLGIGLPTQVVNYLPDNVNITLQSENGFLGLTAFDPENANSNLVNAGGQPCGIKKGGSTFDSAFSFALIRGGHVDACVLGGLEVDQEANLANWMVPGKMVPGMGGAMDLVTGAKKVIIGMEHCAKSGSSKILKKCTLPLTASKKVAMVVTELAVFNFIEGRLVLKEHAPHVDLETIKAKTEADFIVADDFKEMQISQKGLEL.

The active site involves glutamate 46.

This sequence belongs to the 3-oxoacid CoA-transferase subunit B family. Heterotetramer composed of two alpha subunits (AtoD) and two beta subunits (AtoA).

It catalyses the reaction an acyl-CoA + acetate = a carboxylate + acetyl-CoA. It carries out the reaction acetoacetate + acetyl-CoA = acetoacetyl-CoA + acetate. It functions in the pathway lipid metabolism; short-chain fatty acid metabolism. Coenzyme A transferase which is involved in short-chain fatty acid degradation and catalyzes the activation of short-chain fatty acids to their respective CoA thiolesters. The sequence is that of Acetate CoA-transferase subunit beta (atoA) from Haemophilus influenzae (strain ATCC 51907 / DSM 11121 / KW20 / Rd).